The chain runs to 62 residues: Sperm protamine P1 (62 aa).

Residues 1–62 (MARYRRHSRS…RYSRRGRRRY (62 aa)) are disordered.

The protein belongs to the protamine P1 family. Testis.

It localises to the nucleus. Its subcellular location is the chromosome. Functionally, protamines substitute for histones in the chromatin of sperm during the haploid phase of spermatogenesis. They compact sperm DNA into a highly condensed, stable and inactive complex. The chain is Sperm protamine P1 (PRM1) from Neophascogale lorentzii (Long-clawed marsupial mouse).